The sequence spans 421 residues: Bestrophin homolog 2 (421 aa).

4 helical membrane passes run Ile-28–Val-48, Leu-73–Trp-93, Leu-239–Ala-259, and Val-275–Ile-295.

Belongs to the anion channel-forming bestrophin (TC 1.A.46) family. Calcium-sensitive chloride channel subfamily. In terms of assembly, forms oligomers.

It localises to the cell membrane. Its function is as follows. Forms chloride channels. The protein is Bestrophin homolog 2 (best-2) of Caenorhabditis elegans.